The chain runs to 570 residues: High-affinity hexose transporter HXT6 (570 aa).

The Cytoplasmic segment spans residues 1–60 (MSQDAAIAEQTPVEHLSAVDSASHSVLSTPSNKAERDEIKAYGEGEEHEPVVEIPKRPAS). Residues 61-81 (AYVTVSIMCIMIAFGGFVFGW) traverse the membrane as a helical segment. Over 82–116 (DTGTISGFINQTDFIRRFGMKHKDGTNYLSKVRTG) the chain is Extracellular. Asparagine 91 carries N-linked (GlcNAc...) asparagine glycosylation. The helical transmembrane segment at 117–137 (LIVSIFNIGCAIGGIILSKLG) threads the bilayer. Residues 138–143 (DMYGRK) lie on the Cytoplasmic side of the membrane. Residues 144–164 (VGLIVVVVIYIIGIIIQIASI) traverse the membrane as a helical segment. Over 165 to 174 (NKWYQYFIGR) the chain is Extracellular. Residues 175 to 195 (IISGLGVGGIAVLSPMLISEV) traverse the membrane as a helical segment. Topologically, residues 196-201 (SPKHLR) are cytoplasmic. Residues 202 to 222 (GTLVSCYQLMITAGIFLGYCT) traverse the membrane as a helical segment. Residues 223-236 (NFGTKNYSNSVQWR) are Extracellular-facing. The N-linked (GlcNAc...) asparagine glycan is linked to asparagine 228. The helical transmembrane segment at 237 to 257 (VPLGLCFAWALFMIGGMTFVP) threads the bilayer. Residues 258–340 (ESPRYLAEVG…IQSLQQLTGD (83 aa)) are Cytoplasmic-facing. Residues 341–357 (NYFFYYGTTIFKAVGLS) form a helical membrane-spanning segment. The Extracellular portion of the chain corresponds to 358–363 (DSFETS). Residues 364-381 (IVLGIVNFASTFVGIYVV) form a helical membrane-spanning segment. Over 382-388 (ERYGRRT) the chain is Cytoplasmic. The chain crosses the membrane as a helical span at residues 389 to 409 (CLLWGAASMTACMVVYASVGV). The Extracellular portion of the chain corresponds to 410–431 (TRLWPNGQDQPSSKGAGNCMIV). Residues 432–452 (FACFYIFCFATTWAPIPYVVV) traverse the membrane as a helical segment. At 453–469 (SETFPLRVKSKAMSIAT) the chain is on the cytoplasmic side. The helical transmembrane segment at 470–490 (AANWLWGFLIGFFTPFITGAI) threads the bilayer. A topological domain (extracellular) is located at residue asparagine 491. The helical transmembrane segment at 492–512 (FYYGYVFMGCLVFMFFYVLLV) threads the bilayer. Topologically, residues 513-570 (VPETKGLTLEEVNTMWEEGVLPWKSASWVPPSRRGANYDAEEMAHDDKPLYKRMFSTK) are cytoplasmic. Lysine 560 is covalently cross-linked (Glycyl lysine isopeptide (Lys-Gly) (interchain with G-Cter in ubiquitin)).

It belongs to the major facilitator superfamily. Sugar transporter (TC 2.A.1.1) family.

Its subcellular location is the membrane. Functionally, high-affinity glucose transporter. This Saccharomyces cerevisiae (strain ATCC 204508 / S288c) (Baker's yeast) protein is High-affinity hexose transporter HXT6 (HXT6).